Consider the following 264-residue polypeptide: Acetyl-coenzyme A carboxylase carboxyl transferase subunit beta (264 aa).

The region spanning leucine 4 to serine 264 is the CoA carboxyltransferase N-terminal domain. Positions 8, 11, 27, and 29 each coordinate Zn(2+). A C4-type zinc finger spans residues cysteine 8 to cysteine 29.

It belongs to the AccD/PCCB family. As to quaternary structure, acetyl-CoA carboxylase is a heterohexamer composed of biotin carboxyl carrier protein (AccB), biotin carboxylase (AccC) and two subunits each of ACCase subunit alpha (AccA) and ACCase subunit beta (AccD). Zn(2+) serves as cofactor.

It localises to the cytoplasm. The catalysed reaction is N(6)-carboxybiotinyl-L-lysyl-[protein] + acetyl-CoA = N(6)-biotinyl-L-lysyl-[protein] + malonyl-CoA. Its pathway is lipid metabolism; malonyl-CoA biosynthesis; malonyl-CoA from acetyl-CoA: step 1/1. In terms of biological role, component of the acetyl coenzyme A carboxylase (ACC) complex. Biotin carboxylase (BC) catalyzes the carboxylation of biotin on its carrier protein (BCCP) and then the CO(2) group is transferred by the transcarboxylase to acetyl-CoA to form malonyl-CoA. The protein is Acetyl-coenzyme A carboxylase carboxyl transferase subunit beta of Heliobacterium modesticaldum (strain ATCC 51547 / Ice1).